A 428-amino-acid chain; its full sequence is D-amino acid dehydrogenase (428 aa).

3–17 contacts FAD; sequence VVVLGSGVVGVASAY.

The protein belongs to the DadA oxidoreductase family. It depends on FAD as a cofactor.

The catalysed reaction is a D-alpha-amino acid + A + H2O = a 2-oxocarboxylate + AH2 + NH4(+). It participates in amino-acid degradation; D-alanine degradation; NH(3) and pyruvate from D-alanine: step 1/1. Functionally, oxidative deamination of D-amino acids. The polypeptide is D-amino acid dehydrogenase (Burkholderia ambifaria (strain MC40-6)).